Consider the following 78-residue polypeptide: Putative DNA-binding protein MT0521 (78 aa).

A DNA-binding region (H-T-H motif) is located at residues 24–45; it reads LLTVAEVAALMRVSKMTVYRLV.

The protein is Putative DNA-binding protein MT0521 of Mycobacterium tuberculosis (strain CDC 1551 / Oshkosh).